Reading from the N-terminus, the 243-residue chain is Vesicle-associated membrane protein-associated protein B (243 aa).

Ala2 bears the N-acetylalanine mark. At 2–218 the chain is on the cytoplasmic side; sequence AKVEQVLSLE…AALAATGKEE (217 aa). The MSP domain maps to 7-124; sequence VLSLEPQHEL…MDSKLRCVFE (118 aa). Residue Ser146 is modified to Phosphoserine. Lys147 participates in a covalent cross-link: Glycyl lysine isopeptide (Lys-Gly) (interchain with G-Cter in SUMO1). A phosphoserine mark is found at Ser156 and Ser159. Residues 161–196 adopt a coiled-coil conformation; the sequence is LDDTEVKKVMEECRRLQGEVQRLREESRQLKEEDGL. Ser206 carries the phosphoserine modification. The helical; Anchor for type IV membrane protein transmembrane segment at 219–239 threads the bilayer; that stretch reads GLSARLLALVVLFFIVGVIIG.

Belongs to the VAMP-associated protein (VAP) (TC 9.B.17) family. As to quaternary structure, homodimer, and heterodimer with VAPA. Interacts with VAMP1 and VAMP2. Interacts (via MSP domain) with ZFYVE27. Interacts with RMDN3. Interacts with KIF5A in a ZFYVE27-dependent manner. Interacts (via MSP domain) with STARD3 (via phospho-FFAT motif). Interacts with STARD3NL (via FFAT motif). Interacts with CERT1. Interacts with PLEKHA3 and SACM1L to form a ternary complex. Interacts with VPS13A (via FFAT motif). Interacts with RB1CC1 (via phosphorylated FFAT motif), MIGA2 (via phosphorylated FFAT motif), RMDN3 (via phosphorylated FFAT motif), OSBPL1A (via FFAT motif), KCNB1 (via phosphorylated FFAT motif) and KCNB2 (via phosphorylated FFAT motif). Interacts (via MSP domain) with WDR44 (via FFAT motif); the interactions connect the endoplasmic reticulum (ER) with the endosomal tubule.

It localises to the endoplasmic reticulum membrane. Endoplasmic reticulum (ER)-anchored protein that mediates the formation of contact sites between the ER and endosomes via interaction with FFAT motif-containing proteins such as STARD3 or WDR44. Interacts with STARD3 in a FFAT motif phosphorylation dependent manner. Via interaction with WDR44 participates in neosynthesized protein export. Participates in the endoplasmic reticulum unfolded protein response (UPR) by inducing ERN1/IRE1 activity. Involved in cellular calcium homeostasis regulation. The polypeptide is Vesicle-associated membrane protein-associated protein B (Mus musculus (Mouse)).